Consider the following 295-residue polypeptide: MGKLATLNGILKDEASQMKLNVVHLCSSVNAKTIDLALLKATSHTSNNPPSDKYVTFLQSTIDTCYGPDTVDAILHRLRVTTDVCVAAKCLILLHKMVKSESGYNGEDSLRNNINHRTLIYTQGGSNLKLNDLNVNSSRFTRELTPWVQWYKQYLDCYLSIAEVLGITPNIKEKNEDKRLETQRVSSYPMDCILKQIDFLVELFEHISDRPKAPQSKLNKIVIEMTELMVQDYFSAIRLMRIRFEELNVRVAKPNELVPVLEKLENCKEGLSEFSWRSKYLIADFWYLVSKLKDM.

One can recognise an ENTH domain in the interval Cys26–Pro169.

It is found in the membrane. The protein localises to the clathrin-coated pit. It localises to the golgi apparatus. The protein resides in the cytoplasmic vesicle. Its subcellular location is the clathrin-coated vesicle. The sequence is that of Putative clathrin assembly protein At5g65370 from Arabidopsis thaliana (Mouse-ear cress).